Consider the following 415-residue polypeptide: Serine hydroxymethyltransferase 1 (415 aa).

Residues Leu-122 and 126-128 (GHL) contribute to the (6S)-5,6,7,8-tetrahydrofolate site. Lys-230 carries the post-translational modification N6-(pyridoxal phosphate)lysine.

The protein belongs to the SHMT family. In terms of assembly, homodimer. Requires pyridoxal 5'-phosphate as cofactor.

The protein localises to the cytoplasm. The catalysed reaction is (6R)-5,10-methylene-5,6,7,8-tetrahydrofolate + glycine + H2O = (6S)-5,6,7,8-tetrahydrofolate + L-serine. It participates in one-carbon metabolism; tetrahydrofolate interconversion. Its pathway is amino-acid biosynthesis; glycine biosynthesis; glycine from L-serine: step 1/1. Catalyzes the reversible interconversion of serine and glycine with tetrahydrofolate (THF) serving as the one-carbon carrier. This reaction serves as the major source of one-carbon groups required for the biosynthesis of purines, thymidylate, methionine, and other important biomolecules. Also exhibits THF-independent aldolase activity toward beta-hydroxyamino acids, producing glycine and aldehydes, via a retro-aldol mechanism. The sequence is that of Serine hydroxymethyltransferase 1 from Burkholderia thailandensis (strain ATCC 700388 / DSM 13276 / CCUG 48851 / CIP 106301 / E264).